The primary structure comprises 434 residues: 3-phosphoshikimate 1-carboxyvinyltransferase (434 aa).

3-phosphoshikimate contacts are provided by Lys22, Ser23, and Arg27. Lys22 contacts phosphoenolpyruvate. Residues Gly93 and Arg121 each contribute to the phosphoenolpyruvate site. Residues Ser168, Ser169, Gln170, Ser199, Asp320, and Lys347 each contribute to the 3-phosphoshikimate site. Gln170 lines the phosphoenolpyruvate pocket. Asp320 acts as the Proton acceptor in catalysis. Phosphoenolpyruvate is bound by residues Arg351, Arg394, and Lys419.

The protein belongs to the EPSP synthase family. In terms of assembly, monomer.

The protein localises to the cytoplasm. The catalysed reaction is 3-phosphoshikimate + phosphoenolpyruvate = 5-O-(1-carboxyvinyl)-3-phosphoshikimate + phosphate. It participates in metabolic intermediate biosynthesis; chorismate biosynthesis; chorismate from D-erythrose 4-phosphate and phosphoenolpyruvate: step 6/7. Functionally, catalyzes the transfer of the enolpyruvyl moiety of phosphoenolpyruvate (PEP) to the 5-hydroxyl of shikimate-3-phosphate (S3P) to produce enolpyruvyl shikimate-3-phosphate and inorganic phosphate. In Paraburkholderia phytofirmans (strain DSM 17436 / LMG 22146 / PsJN) (Burkholderia phytofirmans), this protein is 3-phosphoshikimate 1-carboxyvinyltransferase.